Reading from the N-terminus, the 265-residue chain is Undecaprenyl-diphosphatase (265 aa).

Helical transmembrane passes span 1 to 21 (MDWLHVVALAVIQGLTEFLPI), 40 to 60 (GLAFDVAVHVGSLAAVVLAFH), 87 to 107 (WAVIVGTLPAVVIGFLLENVI), 113 to 133 (ASLVIAITTLLFGLLLWWADV), 151 to 173 (IIGFAQALALIPGTSRSGITITA), 188 to 208 (SFLLSIPLILAAGSLKGVELI), 214 to 234 (VAWGTLVAGTLMSFVAAWLCI), and 244 to 264 (IGMLPFVIYRLILGIVLLVWV).

This sequence belongs to the UppP family.

The protein resides in the cell inner membrane. It catalyses the reaction di-trans,octa-cis-undecaprenyl diphosphate + H2O = di-trans,octa-cis-undecaprenyl phosphate + phosphate + H(+). Functionally, catalyzes the dephosphorylation of undecaprenyl diphosphate (UPP). Confers resistance to bacitracin. This is Undecaprenyl-diphosphatase from Chromohalobacter salexigens (strain ATCC BAA-138 / DSM 3043 / CIP 106854 / NCIMB 13768 / 1H11).